A 332-amino-acid polypeptide reads, in one-letter code: uncharacterized protein (332 aa).

The signal sequence occupies residues 1–23; that stretch reads MKRIPSLIIGLLLILATWHSVLA. Residues 231–251 form a helical membrane-spanning segment; the sequence is SFFLGMIVTLIILAPVILYLW.

The protein resides in the membrane. This is an uncharacterized protein from Pyrococcus horikoshii (strain ATCC 700860 / DSM 12428 / JCM 9974 / NBRC 100139 / OT-3).